The chain runs to 1141 residues: DNA polymerase II large subunit (1141 aa).

Residues 567 to 587 form a disordered region; that stretch reads AGTRVGGRMGRPGKSAPRKMK.

It belongs to the archaeal DNA polymerase II family. In terms of assembly, heterodimer of a large subunit and a small subunit.

The catalysed reaction is DNA(n) + a 2'-deoxyribonucleoside 5'-triphosphate = DNA(n+1) + diphosphate. The enzyme catalyses Exonucleolytic cleavage in the 3'- to 5'-direction to yield nucleoside 5'-phosphates.. In terms of biological role, possesses two activities: a DNA synthesis (polymerase) and an exonucleolytic activity that degrades single-stranded DNA in the 3'- to 5'-direction. Has a template-primer preference which is characteristic of a replicative DNA polymerase. The polypeptide is DNA polymerase II large subunit (Methanocorpusculum labreanum (strain ATCC 43576 / DSM 4855 / Z)).